The following is a 512-amino-acid chain: Transmembrane protein 102 (512 aa).

The Extracellular segment spans residues 1–267 (MASAVWGNAP…EAWPTLCPAQ (267 aa)). The disordered stretch occupies residues 168–258 (PVPGGRDWIH…PGPQPSEARE (91 aa)). Composition is skewed to basic and acidic residues over residues 174 to 186 (DWIH…EGPR) and 195 to 209 (PHSD…ESLE). Over residues 210–226 (KSPSNVSVPESPQQNLT) the composition is skewed to polar residues. The chain crosses the membrane as a helical span at residues 268 to 284 (VAAWFFASLAAVAESLF). Topologically, residues 285-512 (PVPGAPRLVH…GLAGVGAGSH (228 aa)) are cytoplasmic.

In terms of assembly, interacts with CSF2RB; this interaction occurs preferentially in the absence of CSF2.

The protein localises to the cell membrane. Selectively involved in CSF2 deprivation-induced apoptosis via a mitochondria-dependent pathway. In Bos taurus (Bovine), this protein is Transmembrane protein 102 (TMEM102).